The primary structure comprises 216 residues: Maleylacetoacetate isomerase (216 aa).

Met1 carries the N-acetylmethionine modification. A GST N-terminal domain is found at 4 to 87 (GKPILYSYFR…YLEETRPIPR (84 aa)). Glutathione is bound by residues 14–19 (SSCSWR) and Gln45. Lys57 carries the N6-succinyllysine modification. Glutathione is bound by residues Val59, 71–72 (QS), Gln111, and 115–117 (NLS). Residues 92-212 (DPQKRAIVRM…HPRRQPDTPA (121 aa)) enclose the GST C-terminal domain. Phosphothreonine is present on Thr136. Ser137 carries the post-translational modification Phosphoserine. At Lys177 the chain carries N6-succinyllysine. Phosphoserine is present on Ser181.

It belongs to the GST superfamily. Zeta family. As to quaternary structure, homodimer. Requires glutathione as cofactor. In terms of tissue distribution, expressed in liver, kidney, seminal glands and breast.

It localises to the cytoplasm. It carries out the reaction 4-maleylacetoacetate = 4-fumarylacetoacetate. The enzyme catalyses RX + glutathione = an S-substituted glutathione + a halide anion + H(+). It participates in amino-acid degradation; L-phenylalanine degradation; acetoacetate and fumarate from L-phenylalanine: step 5/6. Functionally, probable bifunctional enzyme showing minimal glutathione-conjugating activity with ethacrynic acid and 7-chloro-4-nitrobenz-2-oxa-1, 3-diazole and maleylacetoacetate isomerase activity. Also has low glutathione peroxidase activity with t-butyl and cumene hydroperoxides. Is able to catalyze the glutathione dependent oxygenation of dichloroacetic acid to glyoxylic acid. The protein is Maleylacetoacetate isomerase (Gstz1) of Mus musculus (Mouse).